The primary structure comprises 255 residues: Acetylglutamate kinase (255 aa).

Substrate contacts are provided by residues glycine 40 to glycine 41, arginine 62, and asparagine 153.

Belongs to the acetylglutamate kinase family. ArgB subfamily.

The protein resides in the cytoplasm. It catalyses the reaction N-acetyl-L-glutamate + ATP = N-acetyl-L-glutamyl 5-phosphate + ADP. It participates in amino-acid biosynthesis; L-arginine biosynthesis; N(2)-acetyl-L-ornithine from L-glutamate: step 2/4. Catalyzes the ATP-dependent phosphorylation of N-acetyl-L-glutamate. The polypeptide is Acetylglutamate kinase (Bacillus anthracis (strain A0248)).